The primary structure comprises 130 residues: Large ribosomal subunit protein bL19 (130 aa).

The protein belongs to the bacterial ribosomal protein bL19 family.

In terms of biological role, this protein is located at the 30S-50S ribosomal subunit interface and may play a role in the structure and function of the aminoacyl-tRNA binding site. The protein is Large ribosomal subunit protein bL19 of Mycoplasma mycoides subsp. mycoides SC (strain CCUG 32753 / NCTC 10114 / PG1).